The following is a 566-amino-acid chain: MDAEHLKRLEGREAEHIPDILNEFNKKHADLLVFDSFHSDNQWHELWLAIFGILDDAQLGHLHTQCLNTVRILTRDEFSLQTNYIEHEVSQLLRLARVEASSLKLPATPDELKQQEEGQLQLQEQPSLAQSDIIAEALKCLCNLVYQSADCRRQCLRQHCLDAILKRVASSMRHPCALEYYDMKLLFLLTALEPAARTRLQIDLNGLTYMTKWLDDKLAEPSCSEEQLNIICELLKVMFNVTSAPDKSPNEYEIQSLHLTGVLRELLLRFGKMATDKERSVVTHAINLLTNISSSCLIELTLKCSNAEEQPKKAVEGVAKAKPAKCCALCFEKRNVRCLTVLLNYLRQALAQQEAEASSHELLSPVLTVLVKCSRSDRVMRHYLRQEILPPLRDVSQRPEIGQELRNHLCRFLTLPAMILRDLAAELLFVLCKEDVGRMIKYTGYGNAAGLFAKRGILDCRRVEGADYSSDSEDSDTEEYKKHQQGINPVLGCVEPKSKHNPLDDMTEEQKESEALQLVNLIEQLRQGGIVKPALIDKDGKPQPLEHILQLQEELPQQQLEQKRKT.

Belongs to the synembryn family. Interacts with GDP-bound G(i)-alpha protein. Does not interact with G-alpha proteins when they are in complex with subunits beta and gamma. Interacts with Frq2 in a Ca(2+)-independent manner but does not interact with Frq1.

The protein resides in the cytoplasm. It is found in the cell cortex. The protein localises to the presynapse. In terms of biological role, chaperone that specifically binds and folds some, but not all, nascent G alpha proteins prior to G protein heterotrimer formation, promoting their stability and activity. Also acts as a guanine nucleotide exchange factor (GEF) for G alpha proteins by stimulating exchange of bound GDP for free GTP. Plays a key role in asymmetric spindle positioning, a step for asymmetric cell division that generates cell diversity during development by activating G(i) alpha protein independently of G-protein coupled receptors. Required during gastrulation and sensory organ precursor (SOP) formation. Plays a role in positively regulating synapse number and neurotransmitter release. This is Chaperone Ric-8 (ric8a) from Drosophila pseudoobscura pseudoobscura (Fruit fly).